Reading from the N-terminus, the 506-residue chain is MAP kinase kinase MKK2/SSP33 (506 aa).

The interval 1 to 69 (MASMFRPPES…TSTTSSMASN (69 aa)) is disordered. The span at 26–52 (LVQNAKSTNDGQHLNRSPYSSVNESPY) shows a compositional bias: polar residues. Residues 53–69 (SNNSTSATSTTSSMASN) show a composition bias toward low complexity. Residues 214-481 (ITTLGILGEG…PRQMLKHPWI (268 aa)) enclose the Protein kinase domain. ATP contacts are provided by residues 220–228 (LGEGAGGSV) and lysine 243. Catalysis depends on aspartate 342, which acts as the Proton acceptor.

The protein belongs to the protein kinase superfamily. STE Ser/Thr protein kinase family. MAP kinase kinase subfamily.

It catalyses the reaction L-seryl-[protein] + ATP = O-phospho-L-seryl-[protein] + ADP + H(+). The catalysed reaction is L-threonyl-[protein] + ATP = O-phospho-L-threonyl-[protein] + ADP + H(+). It carries out the reaction L-tyrosyl-[protein] + ATP = O-phospho-L-tyrosyl-[protein] + ADP + H(+). Its function is as follows. Serine/threonine protein kinase involved in a signal transduction pathway that plays a role in yeast cell morphogenesis and cell growth. This pathway seems to start by SMP3; then involves the kinase PKC1 that may act on the BCK1 kinase that then phosphorylates MKK1 and MKK2 which themselves phosphorylate the MPK1 kinase. The protein is MAP kinase kinase MKK2/SSP33 (MKK2) of Saccharomyces cerevisiae (strain ATCC 204508 / S288c) (Baker's yeast).